The sequence spans 1595 residues: DNA-directed RNA polymerase subunit beta'' (1595 aa).

Zn(2+) is bound by residues C216, C286, C294, and C297.

Belongs to the RNA polymerase beta' chain family. RpoC2 subfamily. As to quaternary structure, in plastids the minimal PEP RNA polymerase catalytic core is composed of four subunits: alpha, beta, beta', and beta''. When a (nuclear-encoded) sigma factor is associated with the core the holoenzyme is formed, which can initiate transcription. Zn(2+) serves as cofactor.

It localises to the plastid. It is found in the chloroplast. It carries out the reaction RNA(n) + a ribonucleoside 5'-triphosphate = RNA(n+1) + diphosphate. DNA-dependent RNA polymerase catalyzes the transcription of DNA into RNA using the four ribonucleoside triphosphates as substrates. The chain is DNA-directed RNA polymerase subunit beta'' from Bigelowiella natans (Pedinomonas minutissima).